The sequence spans 190 residues: dCTP deaminase (190 aa).

113–118 (KSTYAR) provides a ligand contact to dCTP. Glu-139 functions as the Proton donor/acceptor in the catalytic mechanism. DCTP contacts are provided by Gln-158, Tyr-172, Lys-181, and Gln-182.

This sequence belongs to the dCTP deaminase family. As to quaternary structure, homotrimer.

The catalysed reaction is dCTP + H2O + H(+) = dUTP + NH4(+). It participates in pyrimidine metabolism; dUMP biosynthesis; dUMP from dCTP (dUTP route): step 1/2. Catalyzes the deamination of dCTP to dUTP. The polypeptide is dCTP deaminase (Chlamydia felis (strain Fe/C-56) (Chlamydophila felis)).